The primary structure comprises 373 residues: Probable pectin lyase D (373 aa).

An N-terminal signal peptide occupies residues 1-24 (MKYAAALTAVAALAARAAAVGVSG). 2 cysteine pairs are disulfide-bonded: Cys82–Cys101 and Cys91–Cys225. Asn128 carries an N-linked (GlcNAc...) asparagine glycan. Arg255 is an active-site residue. N-linked (GlcNAc...) asparagine glycosylation is present at Asn274. Residues Cys321 and Cys329 are joined by a disulfide bond. An N-linked (GlcNAc...) asparagine glycan is attached at Asn348. A compositionally biased stretch (low complexity) spans 354 to 366 (LPSADAASTSPAS). Residues 354 to 373 (LPSADAASTSPASNAGQGNL) form a disordered region.

This sequence belongs to the polysaccharide lyase 1 family.

The protein localises to the secreted. The enzyme catalyses Eliminative cleavage of (1-&gt;4)-alpha-D-galacturonan methyl ester to give oligosaccharides with 4-deoxy-6-O-methyl-alpha-D-galact-4-enuronosyl groups at their non-reducing ends.. Pectinolytic enzymes consist of four classes of enzymes: pectin lyase, polygalacturonase, pectin methylesterase and rhamnogalacturonase. Among pectinolytic enzymes, pectin lyase is the most important in depolymerization of pectin, since it cleaves internal glycosidic bonds of highly methylated pectins. This chain is Probable pectin lyase D (pelD), found in Aspergillus niger (strain ATCC MYA-4892 / CBS 513.88 / FGSC A1513).